A 489-amino-acid polypeptide reads, in one-letter code: Cytochrome P450 71A26 (489 aa).

Residues 1–21 (MMIMFFLLCSIIFVVTIIIFR) traverse the membrane as a helical segment. Cys431 is a binding site for heme.

The protein belongs to the cytochrome P450 family. Heme serves as cofactor.

It localises to the membrane. The polypeptide is Cytochrome P450 71A26 (CYP71A26) (Arabidopsis thaliana (Mouse-ear cress)).